Reading from the N-terminus, the 133-residue chain is Small ribosomal subunit protein bS6 (133 aa).

This sequence belongs to the bacterial ribosomal protein bS6 family.

Functionally, binds together with bS18 to 16S ribosomal RNA. The polypeptide is Small ribosomal subunit protein bS6 (Chlorobium limicola (strain DSM 245 / NBRC 103803 / 6330)).